The following is an 892-amino-acid chain: Ataxin-7 (892 aa).

Positions 1–15 are enriched in basic and acidic residues; that stretch reads MSERAADDVRGEPRR. 2 disordered regions span residues 1–74 and 195–247; these read MSER…SAAA and SKGG…SRVP. Positions 16–38 are enriched in low complexity; that stretch reads AAAAAGGAAAAAARQQQQQQQQQ. Residues 39 to 55 are compositionally biased toward pro residues; that stretch reads QPPPPQPQRQQHPPPPP. Low complexity predominate over residues 195–222; sequence SKGGSASGSNRSSSGGVLSASSSSSKLL. A Glycyl lysine isopeptide (Lys-Gly) (interchain with G-Cter in SUMO); alternate cross-link involves residue Lys-257. Residue Lys-257 forms a Glycyl lysine isopeptide (Lys-Gly) (interchain with G-Cter in SUMO2); alternate linkage. 4 disordered regions span residues 298–328, 389–505, 616–730, and 818–892; these read PTLPSPGQILNGKGLPAPPTLEKKPEDNSNN, HKNK…ESVE, KSVP…SSHS, and SHGS…KARP. Basic and acidic residues-rich tracts occupy residues 318 to 327 and 389 to 403; these read LEKKPEDNSN and HKNKTREKELIRHPD. The region spanning 334–401 is the SCA7 domain; sequence KRLSEREFDP…KTREKELIRH (68 aa). Pro residues-rich tracts occupy residues 405-419, 448-458, and 468-483; these read QQPPQPLRDPHPAPP, HTPSLPRPPGC, and IDPPPVHESPHPPLPA. Positions 493 to 502 are enriched in acidic residues; that stretch reads EEGEGDDKEE. Residues 616-629 show a composition bias toward polar residues; it reads KSVPAHGTTLNAQP. A compositionally biased stretch (low complexity) spans 640–669; it reads SMQSRQVSSSSSSPSTPSGLSSVPSSPMSR. Positions 670–680 are enriched in basic residues; it reads KPQKLKSSKSL. A compositionally biased stretch (polar residues) spans 685–695; the sequence is SSGNSTNCQNA. Composition is skewed to low complexity over residues 716–730 and 840–851; these read HSSSSSSSSSSSSHS and SPSSSSINNSSS.

It belongs to the ataxin-7 family. As to quaternary structure, component of the SAGA transcription coactivator-HAT complex, at least composed of SUPT3H, GCN5L2, TAF5L, TAF6L, SUPT7L, TADA3L, TAD1L, TAF10, TAF12, TRRAP, TAF9 and ATXN7. The STAGA core complex is associated with a subcomplex required for histone deubiquitination composed of ATXN7L3, ENY2 and USP22. Interacts with SORBS1, PSMC1 and CRX. Interacts with TRRAP, GCN5L2 and TAF10. Interacts with alpha tubulin. In terms of processing, proteolytically cleaved by caspase-7 (CASP7). The cleavage may be involved in SCA7 degeneration: the isoform fragments may exert distinct toxic influences that could contribute to selective neurodegeneration. Post-translationally, sumoylation decreases the aggregation propensity and cellular toxicity of forms with an expanded poly-Gln region but has no effect on subcellular location or interaction with components of the STAGA complex. As to expression, isoform a is expressed in CNS, but is expressed predominantly in the peripherical tissues. Isoform b is expressed in CNS. Also highly expressed in the frontal lobe, skeletal muscle and spinal cord and is expressed at a lower level in the lung, lymphoblast and intestine.

The protein localises to the nucleus. It is found in the nucleolus. Its subcellular location is the nucleus matrix. It localises to the cytoplasm. The protein resides in the cytoskeleton. In terms of biological role, acts as a component of the SAGA (aka STAGA) transcription coactivator-HAT complex. Mediates the interaction of SAGA complex with the CRX and is involved in CRX-dependent gene activation. Probably involved in tethering the deubiquitination module within the SAGA complex. Necessary for microtubule cytoskeleton stabilization. Involved in neurodegeneration. This is Ataxin-7 (ATXN7) from Homo sapiens (Human).